Here is a 1045-residue protein sequence, read N- to C-terminus: E3 ubiquitin-protein ligase Topors (1045 aa).

The segment at 1 to 35 (MGSQPPLGSPLSREEGEAPPPAPASEGRRRSRRVR) is disordered. An E3 ubiquitin-protein ligase activity region spans residues 1-195 (MGSQPPLGSP…RERNASVYSP (195 aa)). The tract at residues 51 to 374 (ELAASAPARP…MAAFDQHANY (324 aa)) is required for DNA-binding. Residues Lys-73, Lys-76, Lys-83, and Lys-88 each participate in a glycyl lysine isopeptide (Lys-Gly) (interchain with G-Cter in SUMO2) cross-link. Phosphoserine is present on Ser-98. The segment at 103-142 (CPICLDRFDNVSYLDRCLHKFCFRCVQEWSKNKAECPLCK) adopts an RING-type zinc-finger fold. Lys-159 participates in a covalent cross-link: Glycyl lysine isopeptide (Lys-Gly) (interchain with G-Cter in SUMO2). Ser-194 carries the post-translational modification Phosphoserine. Lys-249 is covalently cross-linked (Glycyl lysine isopeptide (Lys-Gly) (interchain with G-Cter in SUMO2)). Positions 437–574 (SLLNTSDSSD…STSLSSPRNL (138 aa)) are required for sumoylation and localization to discrete nuclear foci. An interaction with SUMO1 region spans residues 437-654 (SLLNTSDSSD…RSRTRDSSWS (218 aa)). The segment at 442–475 (SDSSDEELVTGGATSQIQGVQTNDDLNNDSDDSS) is disordered. The segment covering 453 to 463 (GATSQIQGVQT) has biased composition (polar residues). The segment at 456–731 (SQIQGVQTND…RRTLSRAHYS (276 aa)) is interaction with p53/TP53. Positions 456-882 (SQIQGVQTND…GKATDTTKHH (427 aa)) are interaction with TOP1. Ser-499 is modified (phosphoserine). Residues 511 to 692 (ETVKTQEQEQ…RSRNRDRYYL (182 aa)) form a disordered region. Positions 521–534 (SYSSGDSDVSRCSS) are enriched in low complexity. Residues 539-565 (LGKDEQINKGHCDSSTRIKSKKEEKRS) show a composition bias toward basic and acidic residues. Lys-560 participates in a covalent cross-link: Glycyl lysine isopeptide (Lys-Gly) (interchain with G-Cter in SUMO). The segment covering 566 to 578 (TSLSSPRNLNSSV) has biased composition (polar residues). The residue at position 585 (Ser-585) is a Phosphoserine. Basic residues-rich tracts occupy residues 588–597 (NHRHRKRGRS), 613–630 (KNHRKHHGKKRMKSKRSR), and 637–647 (PRGRRDKKRSR). Residues 654–669 (SRRSQTLSLSSESTSR) show a composition bias toward low complexity. Lys-701 participates in a covalent cross-link: Glycyl lysine isopeptide (Lys-Gly) (interchain with G-Cter in SUMO2). The tract at residues 713–936 (RDGYESSYRR…DNSGPQDPLQ (224 aa)) is disordered. Ser-718 bears the Phosphoserine; by PLK1 mark. Basic residues predominate over residues 721-730 (RRRTLSRAHY). Positions 731–747 (SRQSSSPEFRVQSFSER) are enriched in polar residues. The residue at position 734 (Ser-734) is a Phosphoserine. 2 stretches are compositionally biased toward basic and acidic residues: residues 755–766 (NHSERKYYYYER) and 816–825 (FASKAKDSHY). Residues Lys-819 and Lys-837 each participate in a glycyl lysine isopeptide (Lys-Gly) (interchain with G-Cter in SUMO2) cross-link. Over residues 854-863 (KHKRRKRKTR) the composition is skewed to basic residues. An interaction with UBE2I region spans residues 854 to 917 (KHKRRKRKTR…ITIDSDSDKD (64 aa)). 2 positions are modified to phosphoserine: Ser-864 and Ser-866. A compositionally biased stretch (basic residues) spans 880 to 897 (KHHKKKKKKHKKKHKKHH). A phosphoserine mark is found at Ser-912, Ser-914, and Ser-1028. Over residues 913 to 923 (DSDKDSEVKED) the composition is skewed to basic and acidic residues.

As to quaternary structure, interacts with PARK7/DJ-1. Interacts with TOP1. Interacts with p53/TP53; can both ubiquitinate and sumoylate p53/TP53. Interacts with the SUMO1 conjugating enzyme UBE2I. Interacts with SUMO1. Interacts with NKX3-1; polyubiquitinates NKX3-1 and induces its proteasomal degradation. Interacts with SIN3A; sumoylates SIN3A. Interacts with IKBKE; induced by DNA damage. Phosphorylation at Ser-98 regulates the E3 ubiquitin-protein ligase activity but not the SUMO1-protein ligase activity. Phosphorylation at Ser-718 increases the E3 ubiquitin-protein ligase activity versus the SUMO1-protein ligase activity resulting in increased p53/TP53 ubiquitination and degradation. Post-translationally, sumoylated. As to expression, expressed at highest levels in testis and at lower levels in adrenal gland, bone marrow, brain, colon, heart, kidney, liver, muscle, ovary, pancreas, placenta, prostate, skeletal muscle, skin, small intestine, spleen, stomach, testis, thymus, thyroid and uterus. Expressed in the alveolar epithelium of the lung. Expression is commonly decreased in colon adenocarcinomas and lung cancers.

The protein resides in the nucleus. Its subcellular location is the PML body. It catalyses the reaction S-ubiquitinyl-[E2 ubiquitin-conjugating enzyme]-L-cysteine + [acceptor protein]-L-lysine = [E2 ubiquitin-conjugating enzyme]-L-cysteine + N(6)-ubiquitinyl-[acceptor protein]-L-lysine.. Functions as an E3 ubiquitin-protein ligase and as an E3 SUMO1-protein ligase. Probable tumor suppressor involved in cell growth, cell proliferation and apoptosis that regulates p53/TP53 stability through ubiquitin-dependent degradation. May regulate chromatin modification through sumoylation of several chromatin modification-associated proteins. May be involved in DNA damage-induced cell death through IKBKE sumoylation. This is E3 ubiquitin-protein ligase Topors (TOPORS) from Homo sapiens (Human).